A 490-amino-acid chain; its full sequence is Cytochrome P450 2C54 (490 aa).

Residue serine 127 is modified to Phosphoserine. 2 positions are modified to N6-acetyllysine: lysine 252 and lysine 375. Heme is bound at residue cysteine 435.

Belongs to the cytochrome P450 family. It depends on heme as a cofactor. In terms of tissue distribution, expressed in liver.

Its subcellular location is the endoplasmic reticulum membrane. It localises to the microsome membrane. The catalysed reaction is an organic molecule + reduced [NADPH--hemoprotein reductase] + O2 = an alcohol + oxidized [NADPH--hemoprotein reductase] + H2O + H(+). Its function is as follows. Metabolizes arachidonic acid mainly to 12-hydroxyeicosatetraenoic acid (HETE). This Mus musculus (Mouse) protein is Cytochrome P450 2C54.